Consider the following 424-residue polypeptide: Glucose-1-phosphate adenylyltransferase (424 aa).

Alpha-D-glucose 1-phosphate contacts are provided by residues Y112, G177, 192 to 193, and S210; that span reads EK.

Belongs to the bacterial/plant glucose-1-phosphate adenylyltransferase family. In terms of assembly, homotetramer.

The catalysed reaction is alpha-D-glucose 1-phosphate + ATP + H(+) = ADP-alpha-D-glucose + diphosphate. The protein operates within glycan biosynthesis; glycogen biosynthesis. In terms of biological role, involved in the biosynthesis of ADP-glucose, a building block required for the elongation reactions to produce glycogen. Catalyzes the reaction between ATP and alpha-D-glucose 1-phosphate (G1P) to produce pyrophosphate and ADP-Glc. The protein is Glucose-1-phosphate adenylyltransferase of Methylococcus capsulatus (strain ATCC 33009 / NCIMB 11132 / Bath).